The sequence spans 206 residues: Triafestin-2 (206 aa).

A signal peptide spans 1-18; the sequence is MKTILAVIFFGILAFAFA. Asparagine 25, asparagine 55, and asparagine 178 each carry an N-linked (GlcNAc...) asparagine glycan.

Belongs to the calycin superfamily. Triabin family. As to quaternary structure, interacts with host coagulation factor XII (F12) (inactive and activated) (via amino acids 1-77). Interacts with host high molecular weight kininogen (KNG1) (via amino acids 402-532). As to expression, salivary gland (at protein level).

The protein localises to the secreted. Zn(2+) modulates binding to host coagulation factor XII (F12) and high molecular weight kininogen (KNG1). Functionally, suppresses activation of the host plasma kallikrein-kinin system, leading to inhibition of the intrinsic coagulation pathway. Blocks host coagulation factor XII (F12) and prekallikrein (KLKB1) reciprocal activation without affecting their amidolytic activities. Blocks binding of host F12 and high molecular weight kininogen (KNG1) to negatively charged surfaces. Attenuates generation of bradykinin by interfering with activation of host kallikrein-kinin system. This chain is Triafestin-2, found in Triatoma infestans (Assassin bug).